A 239-amino-acid polypeptide reads, in one-letter code: uncharacterized protein (239 aa).

The segment at D129–T155 is disordered. A Phosphoserine modification is found at S160.

This is an uncharacterized protein from Schizosaccharomyces pombe (strain 972 / ATCC 24843) (Fission yeast).